Consider the following 146-residue polypeptide: Large ribosomal subunit protein uL15 (146 aa).

Over residues 1-13 (MKLHELKPAEGSR) the composition is skewed to basic and acidic residues. Residues 1-56 (MKLHELKPAEGSRKVRNRVGRGAATGNGKTSGRGQKGQKARSGGSVRPGFEGGQLP) are disordered. Over residues 23-35 (AATGNGKTSGRGQ) the composition is skewed to gly residues.

The protein belongs to the universal ribosomal protein uL15 family. Part of the 50S ribosomal subunit.

In terms of biological role, binds to the 23S rRNA. This Staphylococcus saprophyticus subsp. saprophyticus (strain ATCC 15305 / DSM 20229 / NCIMB 8711 / NCTC 7292 / S-41) protein is Large ribosomal subunit protein uL15.